The primary structure comprises 272 residues: MSLEKISNPQKYISHHLNHLQIDLCNFKFVEPGKIVSHFWVLNIDSIIFSLVLGCFFLSIFYTVAKKITTGVPNGLQASIELIFDFIRSNVKSMYQGKNPLIAPLSLTVFVWVFLMNLMDLIPIDFFPFISERFFHFPAMRIVPSADINITLSMSLGVFILILFYSVKMKGLIGFCKELTLQPFNHPVFFIFNFLLELVSLLSKPISLGLRLFGNMYSGEMIFILIAGLLPWWSQFFLNVPWAIFHILIISLQAFIFMVLTIVYLSMASQSH.

6 helical membrane-spanning segments follow: residues 41–61 (VLNIDSIIFSLVLGCFFLSIF), 110–130 (FVWVFLMNLMDLIPIDFFPFI), 143–165 (VPSADINITLSMSLGVFILILFY), 188–208 (VFFIFNFLLELVSLLSKPISL), 222–242 (IFILIAGLLPWWSQFFLNVPW), and 243–263 (AIFHILIISLQAFIFMVLTIV).

This sequence belongs to the ATPase A chain family. As to quaternary structure, F-type ATPases have 2 components, CF(1) - the catalytic core - and CF(0) - the membrane proton channel. CF(1) has five subunits: alpha(3), beta(3), gamma(1), delta(1), epsilon(1). CF(0) has three main subunits: a(1), b(2) and c(9-12). The alpha and beta chains form an alternating ring which encloses part of the gamma chain. CF(1) is attached to CF(0) by a central stalk formed by the gamma and epsilon chains, while a peripheral stalk is formed by the delta and b chains.

It localises to the cell membrane. In terms of biological role, key component of the proton channel; it plays a direct role in the translocation of protons across the membrane. The protein is ATP synthase subunit a of Buchnera aphidicola subsp. Schizaphis graminum (strain Sg).